The following is a 777-amino-acid chain: Polyribonucleotide nucleotidyltransferase (777 aa).

Asp494 and Asp500 together coordinate Mg(2+). One can recognise a KH domain in the interval 561–620 (PRIITLQIDPSKIGALIGPGGKTIRSIIEQTGAQIDVEDDGRVFVTTPDADGARMAQSLI). An S1 motif domain is found at 630 to 699 (GEIFTGKVVR…GTGKLSLSRR (70 aa)). Positions 703–777 (TGETAEQRKS…NDRRGGGFRG (75 aa)) are disordered. Residues 718 to 727 (GPRGGGGGGD) are compositionally biased toward gly residues. 2 stretches are compositionally biased toward basic and acidic residues: residues 728–761 (RGPR…DRGP) and 768–777 (NDRRGGGFRG).

This sequence belongs to the polyribonucleotide nucleotidyltransferase family. Mg(2+) is required as a cofactor.

The protein localises to the cytoplasm. The catalysed reaction is RNA(n+1) + phosphate = RNA(n) + a ribonucleoside 5'-diphosphate. In terms of biological role, involved in mRNA degradation. Catalyzes the phosphorolysis of single-stranded polyribonucleotides processively in the 3'- to 5'-direction. In Herpetosiphon aurantiacus (strain ATCC 23779 / DSM 785 / 114-95), this protein is Polyribonucleotide nucleotidyltransferase.